We begin with the raw amino-acid sequence, 214 residues long: S-crystallin 1 (214 aa).

Residues 2-79 (PSYTLHYFNH…YLAREFGFHG (78 aa)) form the GST N-terminal domain. Residues 81–214 (NNMEMARVDF…YLQRRCRTDF (134 aa)) enclose the GST C-terminal domain.

Belongs to the GST superfamily. Lens.

In terms of biological role, S-crystallins are structural components of squids and octopi eye lens. Contains relatively little GST activity (1/1000 of that of mammalian GST enzyme). The sequence is that of S-crystallin 1 (OCTS1) from Octopus vulgaris (Common octopus).